A 324-amino-acid polypeptide reads, in one-letter code: Tetrachlorobenzoquinone reductase (324 aa).

Residues 5 to 107 (VSTIDMTVTQ…VPPANNFALV (103 aa)) enclose the FAD-binding FR-type domain. Residues 238–324 (FTVVLARRSG…SKSPRLVLDI (87 aa)) enclose the 2Fe-2S ferredoxin-type domain. Positions 273, 278, 281, and 311 each coordinate [2Fe-2S] cluster.

The protein belongs to the PDR/VanB family. Homotrimer. FMN serves as cofactor. It depends on [2Fe-2S] cluster as a cofactor.

The catalysed reaction is 2,3,5,6-tetrachlorohydroquinone + NAD(+) + H(+) = 2,3,5,6-tetrachloro-1,4-benzoquinone + NADH. It participates in xenobiotic degradation; pentachlorophenol degradation. Its activity is regulated as follows. In vitro, activated by tetrachlorohydroquinone (TCHQ) at low concentrations and inhibited at high concentrations (above 200 uM). However, PcpD would only be stimulated by tetrachlorohydroquinone (TCHQ) under in vivo conditions due to the toxicity of tetrachlorohydroquinone (TCHQ). Competitively inhibited by pentachlorophenol (PCP) in a concentration-dependent manner. PcpD is regulated by tetrachlorohydroquinone (TCHQ) and pentachlorophenol (PCP) using a mechanism, which maintains tetrachlorobenzoquinone at a level that would neither significantly decrease the biodegradation of pentachlorophenol (PCP) nor cause cytotoxicity in cells. Involved in the degradation of the xenobiocide pentachlorophenol (PCP). Catalyzes the reduction of tetrachlorobenzoquinone (TCBQ) to yield tetrachlorohydroquinone (TCHQ). Also able to reduce 2,6-dichloroindophenol (DCIP). In Sphingobium chlorophenolicum, this protein is Tetrachlorobenzoquinone reductase.